The primary structure comprises 79 residues: Morintide mO2 (79 aa).

The N-terminal stretch at 1 to 20 (MAKLSFLSLFLLCLVATATA) is a signal peptide. The region spanning 21 to 63 (QNCGRQAGNRACANGLCCSQYGFCGSTSEYCSRANGCQSNCRG) is the Chitin-binding type-1 domain. 4 cysteine pairs are disulfide-bonded: Cys23-Cys38, Cys32-Cys44, Cys37-Cys51, and Cys57-Cys61. Positions 64-79 (GGGAGGAGGGAGGGSP) are excised as a propeptide.

Leaves (at protein level).

Functionally, chitin-binding protein which functions in defense against chitin-containing fungal pathogens. This Moringa oleifera (Horseradish tree) protein is Morintide mO2.